The sequence spans 288 residues: Alpha/beta hydrolase domain-containing protein 17B (288 aa).

Active-site charge relay system residues include serine 170, aspartate 235, and histidine 264. Serine 282 is subject to Phosphoserine.

This sequence belongs to the AB hydrolase superfamily. ABHD17 family. In terms of processing, palmitoylated on cysteine residues located in a cysteine cluster at the N-terminus which promotes membrane localization. Palmitoylation is required for post-synaptic localization and for depalmitoylating activity towards DLG4/PSD95.

The protein resides in the cell membrane. It is found in the recycling endosome membrane. Its subcellular location is the cell projection. The protein localises to the dendritic spine. It localises to the postsynaptic density membrane. It catalyses the reaction S-hexadecanoyl-L-cysteinyl-[protein] + H2O = L-cysteinyl-[protein] + hexadecanoate + H(+). Its activity is regulated as follows. Inhibited by palmostatin-B. Its function is as follows. Hydrolyzes fatty acids from S-acylated cysteine residues in proteins. Has depalmitoylating activity towards DLG4/PSD95. Has depalmitoylating activity towards GAP43. Has depalmitoylating activity towards MAP6. Has depalmitoylating activity towards NRAS. This is Alpha/beta hydrolase domain-containing protein 17B from Homo sapiens (Human).